A 137-amino-acid polypeptide reads, in one-letter code: Probable disulfide formation protein C (137 aa).

A helical membrane pass occupies residues 6 to 25 (ENLMLGSWLTALTAMLGSLY). Cys-35 and Cys-38 are joined by a disulfide. 2 helical membrane passes run 40–59 (YQRIIMYPLVLILFIGYLKR) and 66–83 (YSLWFSLIGMFTSLYHYS). A disulfide bridge connects residues Cys-97 and Cys-102. Residues 111-133 (GFVTIPFLAFTAFVIIFICSLLI) traverse the membrane as a helical segment.

Belongs to the DsbB family. BdbC subfamily.

It localises to the cell membrane. In terms of biological role, required for disulfide bond formation in some proteins. This Halalkalibacterium halodurans (strain ATCC BAA-125 / DSM 18197 / FERM 7344 / JCM 9153 / C-125) (Bacillus halodurans) protein is Probable disulfide formation protein C.